The chain runs to 1641 residues: Ophiophagus venom factor (1641 aa).

The signal sequence occupies residues M1–G22. Residues N181 and N209 are each glycosylated (N-linked (GlcNAc...) asparagine). Residues P507, D530, V531, and D533 each contribute to the Mg(2+) site. 12 disulfide bridges follow: C535–C796, C604–C639, C672–C699, C673–C706, C686–C707, C852–C1491, C1336–C1467, C1367–C1436, C1484–C1489, C1496–C1568, C1515–C1639, and C1615–C1624. A propeptide spanning residues R645 to N728 is cleaved from the precursor. Positions S649–R727 are C3a-like domain. The 36-residue stretch at C672–C707 folds into the Anaphylatoxin-like domain. The factor B binding site stretch occupies residues E731–P742. Residues H981–Y1259 constitute a propeptide that is removed on maturation. A C3d-like domain region spans residues H981–Y1259. Positions C989–Q992 form a cross-link, isoglutamyl cysteine thioester (Cys-Gln). The interval V1186 to T1249 is factor H binding site. Residues C1496–C1639 form the NTR domain.

This sequence belongs to the venom complement C3 homolog family. Heterotrimer of alpha, beta and gamma chains; disulfide-linked. May be active with factor B in the presence of factor D. Post-translationally, first processed by the removal of 4 Arg residues by furin-type protease, forming two chains, alpha and gamma/beta precursor, linked by a disulfide bond. Probably, a cobrin-like protease cleaves the C3a-like domain and then the C3d-like domain, generating the mature venom factor (OVF). In terms of processing, the beta chain is not glycosylated. In terms of tissue distribution, expressed by the venom gland.

The protein resides in the secreted. In terms of biological role, complement-activating protein in cobra venom. It is a structural and functional analog of complement component C3b, the activated form of C3. It binds factor B (CFB), which is subsequently cleaved by factor D (CFD) to form the bimolecular complex OVF/Bb. OVF/Bb is a C3/C5 convertase that cleaves both complement components C3 and C5. Structurally, it resembles the C3b degradation product C3c, which is not able to form a C3/C5 convertase. Unlike C3b/Bb, OVF/Bb is a stable complex and completely resistant to the actions of complement regulatory factors H (CFH) and I (CFI). Therefore, OVF continuously activates complement. As a result, OVF exhibits complement-depleting activity. This is Ophiophagus venom factor from Ophiophagus hannah (King cobra).